Consider the following 373-residue polypeptide: Histone-lysine N-methyltransferase SETD7 (373 aa).

The interval 1–20 is disordered; the sequence is MDSDDDNMEEVVEGPLDEDD. MORN repeat units follow at residues 36 to 58, 59 to 81, and 106 to 128; these read FEGH…DGST, LEGF…DGGA, and FRGR…DGAC. The SET domain maps to 214-336; that stretch reads QRVYVGQSLI…KDEELTVAYG (123 aa). Residues 226–228, Asn296, and His297 each bind S-adenosyl-L-methionine; that span reads AGE.

It belongs to the class V-like SAM-binding methyltransferase superfamily. Histone-lysine methyltransferase family. SET7 subfamily.

Its subcellular location is the nucleus. The protein localises to the chromosome. The enzyme catalyses L-lysyl(4)-[histone H3] + S-adenosyl-L-methionine = N(6)-methyl-L-lysyl(4)-[histone H3] + S-adenosyl-L-homocysteine + H(+). It catalyses the reaction L-lysyl-[protein] + S-adenosyl-L-methionine = N(6)-methyl-L-lysyl-[protein] + S-adenosyl-L-homocysteine + H(+). Histone methyltransferase that specifically monomethylates 'Lys-4' of histone H3. H3 'Lys-4' methylation represents a specific tag for epigenetic transcriptional activation. Plays a central role in the transcriptional activation of genes. Also has methyltransferase activity toward non-histone proteins. The chain is Histone-lysine N-methyltransferase SETD7 (setd7) from Danio rerio (Zebrafish).